The chain runs to 397 residues: Ubiquitin-like modifier-activating enzyme 5 (397 aa).

Glycine 76, aspartate 97, lysine 120, asparagine 143, and asparagine 177 together coordinate ATP. 2 residues coordinate Zn(2+): cysteine 219 and cysteine 222. Cysteine 243 functions as the Glycyl thioester intermediate in the catalytic mechanism. 2 residues coordinate Zn(2+): cysteine 296 and cysteine 301. The interval 343-384 is disordered; sequence PSDAPTDLSQSTDVGQGLRLAYEAPEKSSAEATQAATAPVDD.

This sequence belongs to the ubiquitin-activating E1 family. UBA5 subfamily.

E1-like enzyme which activates UFM1. The protein is Ubiquitin-like modifier-activating enzyme 5 of Drosophila pseudoobscura pseudoobscura (Fruit fly).